Consider the following 106-residue polypeptide: Integration host factor subunit beta (106 aa).

A disordered region spans residues 57–106 (PARAGRNPRTGEHVPVEQKSVPFFKTGKEMRERLNRDGLDGATPPSPPAA). Positions 82–95 (TGKEMRERLNRDGL) are enriched in basic and acidic residues.

It belongs to the bacterial histone-like protein family. In terms of assembly, heterodimer of an alpha and a beta chain.

This protein is one of the two subunits of integration host factor, a specific DNA-binding protein that functions in genetic recombination as well as in transcriptional and translational control. The chain is Integration host factor subunit beta from Afipia carboxidovorans (strain ATCC 49405 / DSM 1227 / KCTC 32145 / OM5) (Oligotropha carboxidovorans).